The chain runs to 222 residues: Kinetochore protein Spc25 (222 aa).

Residues 51-86 (RHQRKVGKLQKVLMERREELDKRVSFIEELDRELEA) are a coiled coil.

Belongs to the SPC25 family. As to quaternary structure, component of the Ndc80 complex, which is composed of Ndc80, Nuf2 and Spc25.

Its subcellular location is the nucleus. It is found in the chromosome. The protein resides in the centromere. The protein localises to the kinetochore. In terms of biological role, acts as a component of the essential kinetochore-associated Ndc80 complex, which is required for chromosome segregation and spindle checkpoint activity during meiosis and mitosis. Required for kinetochore integrity and the organization of stable microtubule binding sites in the outer plate of the kinetochore. Participates in SAC signaling that responds specifically to disruptions in spindle microtubule dynamics. The NDC80 complex synergistically enhances the affinity of the SKA1 complex for microtubules and may allow the NDC80 complex to track depolymerizing microtubules. This Drosophila mauritiana (Fruit fly) protein is Kinetochore protein Spc25.